A 345-amino-acid chain; its full sequence is Probable dual-specificity RNA methyltransferase RlmN (345 aa).

The active-site Proton acceptor is Glu90. Residues 96-327 form the Radical SAM core domain; it reads QSYGNSVCVT…CIVRREFGHD (232 aa). An intrachain disulfide couples Cys103 to Cys332. [4Fe-4S] cluster contacts are provided by Cys110, Cys114, and Cys117. S-adenosyl-L-methionine contacts are provided by residues 160–161, Ser192, 215–217, and Asn291; these read GE and SLH. Catalysis depends on Cys332, which acts as the S-methylcysteine intermediate.

It belongs to the radical SAM superfamily. RlmN family. [4Fe-4S] cluster is required as a cofactor.

The protein resides in the cytoplasm. It catalyses the reaction adenosine(2503) in 23S rRNA + 2 reduced [2Fe-2S]-[ferredoxin] + 2 S-adenosyl-L-methionine = 2-methyladenosine(2503) in 23S rRNA + 5'-deoxyadenosine + L-methionine + 2 oxidized [2Fe-2S]-[ferredoxin] + S-adenosyl-L-homocysteine. It carries out the reaction adenosine(37) in tRNA + 2 reduced [2Fe-2S]-[ferredoxin] + 2 S-adenosyl-L-methionine = 2-methyladenosine(37) in tRNA + 5'-deoxyadenosine + L-methionine + 2 oxidized [2Fe-2S]-[ferredoxin] + S-adenosyl-L-homocysteine. Functionally, specifically methylates position 2 of adenine 2503 in 23S rRNA and position 2 of adenine 37 in tRNAs. The polypeptide is Probable dual-specificity RNA methyltransferase RlmN (Spiroplasma citri).